The sequence spans 184 residues: ADP-ribosylation factor-like protein 2 (184 aa).

G2 carries the N-myristoyl glycine lipid modification. G23–T30 contributes to the GTP binding site. At S45 the chain carries Phosphoserine. Residues D66–Q70 and G68 each bind GTP. K71 is covalently cross-linked (Glycyl lysine isopeptide (Lys-Gly) (interchain with G-Cter in ubiquitin)). A GTP-binding site is contributed by N125–D128.

The protein belongs to the small GTPase superfamily. Arf family. As to quaternary structure, interacts with ELMOD2. Interacts with ARL2BP; the GTP-bound form interacts with ARL2BP. The GDP-bound form interacts preferentially with TBCD. Interacts with UNC119. Found in a complex with ARL2, ARL2BP and SLC25A4. The GTP-bound form interacts with PDE6D. Found in a complex with ARL2, ARL2BP and SLC25A6. Found in a complex with at least ARL2, PPP2CB, PPP2R1A, PPP2R2A, PPP2R5E and TBCD. Post-translationally, not N-myristoylated. As to expression, expressed in liver and retina (at protein level).

It is found in the nucleus. It localises to the mitochondrion intermembrane space. Its subcellular location is the cytoplasm. The protein localises to the cytoskeleton. The protein resides in the microtubule organizing center. It is found in the centrosome. It localises to the mitochondrion. Its function is as follows. Small GTP-binding protein which cycles between an inactive GDP-bound and an active GTP-bound form, and the rate of cycling is regulated by guanine nucleotide exchange factors (GEF) and GTPase-activating proteins (GAP). GTP-binding protein that does not act as an allosteric activator of the cholera toxin catalytic subunit. Regulates formation of new microtubules and centrosome integrity. Prevents the TBCD-induced microtubule destruction. Participates in association with TBCD, in the disassembly of the apical junction complexes. Antagonizes the effect of TBCD on epithelial cell detachment and tight and adherens junctions disassembly. Together with ARL2, plays a role in the nuclear translocation, retention and transcriptional activity of STAT3. Component of a regulated secretory pathway involved in Ca(2+)-dependent release of acetylcholine. Required for normal progress through the cell cycle. This is ADP-ribosylation factor-like protein 2 (ARL2) from Bos taurus (Bovine).